Reading from the N-terminus, the 947-residue chain is Valine--tRNA ligase (947 aa).

The 'HIGH' region signature appears at 45–55 (PNVTGSLHMGH). The 'KMSKS' region signature appears at 591–595 (KMSKS). Residue K594 participates in ATP binding. Residues 879-943 (DLAAEQARLE…ASLRTALTRV (65 aa)) adopt a coiled-coil conformation.

It belongs to the class-I aminoacyl-tRNA synthetase family. ValS type 1 subfamily. In terms of assembly, monomer.

Its subcellular location is the cytoplasm. It carries out the reaction tRNA(Val) + L-valine + ATP = L-valyl-tRNA(Val) + AMP + diphosphate. Functionally, catalyzes the attachment of valine to tRNA(Val). As ValRS can inadvertently accommodate and process structurally similar amino acids such as threonine, to avoid such errors, it has a 'posttransfer' editing activity that hydrolyzes mischarged Thr-tRNA(Val) in a tRNA-dependent manner. This Agrobacterium fabrum (strain C58 / ATCC 33970) (Agrobacterium tumefaciens (strain C58)) protein is Valine--tRNA ligase.